The primary structure comprises 474 residues: Glycogen synthase (474 aa).

Lys15 contacts ADP-alpha-D-glucose.

This sequence belongs to the glycosyltransferase 1 family. Bacterial/plant glycogen synthase subfamily.

The enzyme catalyses [(1-&gt;4)-alpha-D-glucosyl](n) + ADP-alpha-D-glucose = [(1-&gt;4)-alpha-D-glucosyl](n+1) + ADP + H(+). It functions in the pathway glycan biosynthesis; glycogen biosynthesis. Its function is as follows. Synthesizes alpha-1,4-glucan chains using ADP-glucose. This is Glycogen synthase from Chlamydia trachomatis serovar A (strain ATCC VR-571B / DSM 19440 / HAR-13).